We begin with the raw amino-acid sequence, 364 residues long: Small ribosomal subunit biogenesis GTPase RsgA (364 aa).

Residues 101–264 form the CP-type G domain; sequence KGLVEKPGVP…VIDTPGLREL (164 aa). GTP is bound by residues 154-157 and 206-214; these read NKSD and GSSGAGKST. Zn(2+) contacts are provided by Cys288, Cys293, His295, and Cys301. Residues 339–364 are disordered; sequence QVAQKRKRKTIPRQGKRWRREHGDGQ. Residues 342–358 are compositionally biased toward basic residues; it reads QKRKRKTIPRQGKRWRR.

The protein belongs to the TRAFAC class YlqF/YawG GTPase family. RsgA subfamily. Monomer. Associates with 30S ribosomal subunit, binds 16S rRNA. The cofactor is Zn(2+).

The protein localises to the cytoplasm. Functionally, one of several proteins that assist in the late maturation steps of the functional core of the 30S ribosomal subunit. Helps release RbfA from mature subunits. May play a role in the assembly of ribosomal proteins into the subunit. Circularly permuted GTPase that catalyzes slow GTP hydrolysis, GTPase activity is stimulated by the 30S ribosomal subunit. The sequence is that of Small ribosomal subunit biogenesis GTPase RsgA from Syntrophotalea carbinolica (strain DSM 2380 / NBRC 103641 / GraBd1) (Pelobacter carbinolicus).